Here is a 1094-residue protein sequence, read N- to C-terminus: Formin-like protein 1 (1094 aa).

3 disordered regions span residues 1 to 29, 173 to 199, and 507 to 627; these read MGNA…KQPM, SGAE…VPKS, and AATP…GVKA. Gly-2 carries N-myristoyl glycine lipidation. Ser-7 is modified (phosphoserine). Residues 16 to 28 are compositionally biased toward pro residues; sequence ASPPKQPAVPKQP. One can recognise a GBD/FH3 domain in the interval 27–464; the sequence is QPMPAAGELE…SRRIPEPEKV (438 aa). Ser-184 carries the phosphoserine modification. Positions 519 to 529 are enriched in polar residues; the sequence is RVSTDSPSTAE. Composition is skewed to pro residues over residues 535–549 and 559–610; these read ASPP…PPLP and PSAP…PGGP. The FH2 domain maps to 627-1018; the sequence is AKKPIQTKFR…DTSGREEPPT (392 aa). A Phosphoserine modification is found at Ser-688. The span at 1002–1017 shows a compositional bias: basic and acidic residues; sequence WKKEAAADTSGREEPP. The tract at residues 1002–1094 is disordered; the sequence is WKKEAAADTS…PLPVTTDLAL (93 aa). Ser-1021 is modified (phosphoserine). Positions 1049–1082 constitute a DAD domain; sequence SDRDGAIEDIITDLRNQPYIRADTGRRSARRRPP.

The protein belongs to the formin homology family. Interacts with RAC1, PFN1 and PFN2. Interacts (activated by RAC1) with SRGAP2 (via SH3 domain); regulates the actin filament severing activity of FMNL1. In terms of processing, myristoylation mediates membrane localization. In terms of tissue distribution, highly expressed in the spleen, lymph node and bone marrow cells.

It is found in the cytoplasm. The protein resides in the cell membrane. Its subcellular location is the cytoplasmic vesicle. It localises to the phagosome. Plays a role in the regulation of cell morphology and cytoskeletal organization. Required in the cortical actin filament dynamics and cell shape. May play a role in the control of cell motility and survival of macrophages. This is Formin-like protein 1 (Fmnl1) from Mus musculus (Mouse).